Here is a 501-residue protein sequence, read N- to C-terminus: Pyruvate kinase (501 aa).

Arg-50 is a substrate binding site. K(+)-binding residues include Asn-52, Ser-54, Asp-85, and Thr-86. ATP is bound at residue 52–55 (NFSH). Arg-92 and Lys-178 together coordinate ATP. Residue Glu-243 participates in Mg(2+) binding. Substrate is bound by residues Gly-266, Asp-267, and Thr-299. Asp-267 contributes to the Mg(2+) binding site.

Belongs to the pyruvate kinase family. Homotetramer. Mg(2+) serves as cofactor. Requires K(+) as cofactor.

It catalyses the reaction pyruvate + ATP = phosphoenolpyruvate + ADP + H(+). It participates in carbohydrate degradation; glycolysis; pyruvate from D-glyceraldehyde 3-phosphate: step 5/5. The chain is Pyruvate kinase (PYK1) from Kluyveromyces lactis (strain ATCC 8585 / CBS 2359 / DSM 70799 / NBRC 1267 / NRRL Y-1140 / WM37) (Yeast).